A 219-amino-acid polypeptide reads, in one-letter code: Ribose-5-phosphate isomerase A (219 aa).

Residues 28 to 31, 81 to 84, and 94 to 97 each bind substrate; these read TGST, DGAD, and KGGG. Glu103 (proton acceptor) is an active-site residue. Lys121 is a substrate binding site.

Belongs to the ribose 5-phosphate isomerase family. As to quaternary structure, homodimer.

The enzyme catalyses aldehydo-D-ribose 5-phosphate = D-ribulose 5-phosphate. It participates in carbohydrate degradation; pentose phosphate pathway; D-ribose 5-phosphate from D-ribulose 5-phosphate (non-oxidative stage): step 1/1. In terms of biological role, catalyzes the reversible conversion of ribose-5-phosphate to ribulose 5-phosphate. In Photobacterium profundum (strain SS9), this protein is Ribose-5-phosphate isomerase A.